Here is a 502-residue protein sequence, read N- to C-terminus: Actin nucleation-promoting factor WAS (502 aa).

One can recognise a WH1 domain in the interval 39-148 (LGRKCLTLAT…ALVQEKIQKR (110 aa)). The disordered stretch occupies residues 146-240 (QKRNQRQSGD…KKISKADIGA (95 aa)). Positions 201–211 (DIQNPDITSSR) are enriched in polar residues. Ser221 carries the post-translational modification Phosphoserine. The CRIB domain occupies 238–251 (IGAPSGFKHVSHVG). Tyr291 carries the phosphotyrosine; by FYN and HCK modification. The disordered stretch occupies residues 307–502 (MRRQEPLPPP…DEDEDDEWDD (196 aa)). GRSGPLPPXP motif repeat units follow at residues 337 to 346 (GRSGPLPPVP) and 376 to 385 (GRSGPLPPPP). Pro residues predominate over residues 341 to 419 (PLPPVPLGIA…PAPPPLPPAL (79 aa)). The WH2 domain occupies 430-447 (GRGALLDQIRQGIQLNKT). Phosphoserine; by CK2 is present on residues Ser483 and Ser484. Residues 486–502 (EGEDQAGDEDEDDEWDD) are compositionally biased toward acidic residues.

In terms of assembly, binds the Arp2/3 complex. Interacts with CDC42, RAC, NCK, HCK, FYN, SRC kinase FGR, BTK, ABL1, PSTPIP1, WIP, and to the p85 subunit of PLC-gamma. Interacts (via C-terminus) with ALDOA. Interacts with NCK1 (via SH3 domains). Interacts with FCHSD2. (Microbial infection) Interacts with E.coli effector protein EspF(U). Post-translationally, phosphorylated at Tyr-291 by FYN and HCK, inducing WAS effector activity after TCR engagement. Phosphorylation at Tyr-291 enhances WAS activity in promoting actin polymerization and filopodia formation. As to expression, expressed predominantly in the thymus. Also found, to a much lesser extent, in the spleen.

The protein localises to the cytoplasm. It is found in the cytoskeleton. It localises to the nucleus. Its function is as follows. Effector protein for Rho-type GTPases that regulates actin filament reorganization via its interaction with the Arp2/3 complex. Important for efficient actin polymerization. Possible regulator of lymphocyte and platelet function. Mediates actin filament reorganization and the formation of actin pedestals upon infection by pathogenic bacteria. In addition to its role in the cytoplasmic cytoskeleton, also promotes actin polymerization in the nucleus, thereby regulating gene transcription and repair of damaged DNA. Promotes homologous recombination (HR) repair in response to DNA damage by promoting nuclear actin polymerization, leading to drive motility of double-strand breaks (DSBs). The polypeptide is Actin nucleation-promoting factor WAS (WAS) (Homo sapiens (Human)).